Reading from the N-terminus, the 134-residue chain is Small ribosomal subunit protein uS9 (134 aa).

A disordered region spans residues 113–134 (REVERKKYGLKKARRAPQFSKR). Residues 120–134 (YGLKKARRAPQFSKR) show a composition bias toward basic residues.

Belongs to the universal ribosomal protein uS9 family.

This chain is Small ribosomal subunit protein uS9, found in Thermotoga petrophila (strain ATCC BAA-488 / DSM 13995 / JCM 10881 / RKU-1).